The primary structure comprises 518 residues: Glutamate--cysteine ligase (518 aa).

Belongs to the glutamate--cysteine ligase type 1 family. Type 1 subfamily.

The catalysed reaction is L-cysteine + L-glutamate + ATP = gamma-L-glutamyl-L-cysteine + ADP + phosphate + H(+). Its pathway is sulfur metabolism; glutathione biosynthesis; glutathione from L-cysteine and L-glutamate: step 1/2. The protein is Glutamate--cysteine ligase of Citrobacter koseri (strain ATCC BAA-895 / CDC 4225-83 / SGSC4696).